The following is a 338-amino-acid chain: Fructose-1,6-bisphosphatase 1 (338 aa).

The residue at position 2 (Ala-2) is an N-acetylalanine. Residues 18 to 22 and 28 to 32 each bind AMP; these read VMEEG and TGELT. Residues Asp-69 and Glu-98 each contribute to the Mg(2+) site. 113–114 contributes to the AMP binding site; the sequence is KY. Mg(2+) contacts are provided by Asp-119, Leu-121, and Asp-122. 122–125 contributes to the substrate binding site; that stretch reads DGSS. Residue Arg-141 coordinates AMP. At Lys-151 the chain carries N6-succinyllysine. Substrate-binding positions include 213–216, 244–249, Tyr-265, and 275–277; these read NEGY, RYVGSM, and KLR. Phosphotyrosine is present on residues Tyr-216, Tyr-245, and Tyr-265. Glu-281 provides a ligand contact to Mg(2+).

Belongs to the FBPase class 1 family. As to quaternary structure, homotetramer. Mg(2+) is required as a cofactor. As to expression, expressed in pancreatic islets.

The enzyme catalyses beta-D-fructose 1,6-bisphosphate + H2O = beta-D-fructose 6-phosphate + phosphate. Its pathway is carbohydrate biosynthesis; gluconeogenesis. Subject to complex allosteric regulation. The enzyme can assume an active R-state, or an inactive T-state. Intermediate conformations may exist. AMP acts as an allosteric inhibitor. AMP binding affects the turnover of bound substrate and not the affinity for substrate. Fructose 2,6-bisphosphate acts as a competitive inhibitor. Fructose 2,6-bisphosphate and AMP have synergistic effects. Functionally, catalyzes the hydrolysis of fructose 1,6-bisphosphate to fructose 6-phosphate in the presence of divalent cations, acting as a rate-limiting enzyme in gluconeogenesis. Plays a role in regulating glucose sensing and insulin secretion of pancreatic beta-cells. Appears to modulate glycerol gluconeogenesis in liver. Important regulator of appetite and adiposity; increased expression of the protein in liver after nutrient excess increases circulating satiety hormones and reduces appetite-stimulating neuropeptides and thus seems to provide a feedback mechanism to limit weight gain. The protein is Fructose-1,6-bisphosphatase 1 (FBP1) of Homo sapiens (Human).